A 435-amino-acid polypeptide reads, in one-letter code: Deoxybrevianamide E synthase (435 aa).

The interval 1–28 (MTAPELRAPAGHPQEPPARSSPAQALSS) is disordered. E96 contributes to the brevianamide F binding site. Positions 110, 195, 197, 265, 267, 354, 419, and 423 each coordinate dimethylallyl diphosphate.

Belongs to the tryptophan dimethylallyltransferase family. In terms of assembly, monomer.

It catalyses the reaction brevianamide F + dimethylallyl diphosphate = deoxybrevianamide E + diphosphate. The protein operates within alkaloid biosynthesis. Its function is as follows. Deoxybrevianamide E synthase; part of the gene cluster that mediates the biosynthesis of notoamide, a fungal indole alkaloid that belongs to a family of natural products containing a characteristic bicyclo[2.2.2]diazaoctane core. The first step of notoamide biosynthesis involves coupling of L-proline and L-tryptophan by the bimodular NRPS notE', to produce cyclo-L-tryptophan-L-proline called brevianamide F. The reverse prenyltransferase notF' then acts as a deoxybrevianamide E synthase and converts brevianamide F to deoxybrevianamide E via reverse prenylation at C-2 of the indole ring leading to the bicyclo[2.2.2]diazaoctane core. Deoxybrevianamide E is further hydroxylated at C-6 of the indole ring, likely catalyzed by the cytochrome P450 monooxygenase notG', to yield 6-hydroxy-deoxybrevianamide E. 6-hydroxy-deoxybrevianamide E is a specific substrate of the prenyltransferase notC' for normal prenylation at C-7 to produce 6-hydroxy-7-prenyl-deoxybrevianamide, also called notoamide S. As the proposed pivotal branching point in notoamide biosynthesis, notoamide S can be diverted to notoamide E through an oxidative pyran ring closure putatively catalyzed by either notH' cytochrome P450 monooxygenase or the notD' FAD-linked oxidoreductase. This step would be followed by an indole 2,3-epoxidation-initiated pinacol-like rearrangement catalyzed by the notB' FAD-dependent monooxygenase leading to the formation of notoamide C and notoamide D. On the other hand notoamide S is converted to notoamide T by notH' (or notD'), a bifunctional oxidase that also functions as the intramolecular Diels-Alderase responsible for generation of (-)-notoamide T. To generate antipodal (+)-notoaminide T, notH (or notD) in Aspergillus strain MF297-2 is expected to catalyze a Diels-Alder reaction leading to the opposite stereochemistry. The remaining oxidoreductase notD' (or notH') likely catalyzes the oxidative pyran ring formation to yield (-)-stephacidin A. The FAD-dependent monooxygenase notI' is highly similar to notB' and is predicted to catalyze a similar conversion from (-)-stephacidin A to (+)-notoamide B via the 2,3-epoxidation of (-)-stephacidin A followed by a pinacol-type rearrangement. Finally, it remains unclear which enzyme could be responsible for the final hydroxylation steps leading to notoamide A and sclerotiamide. The chain is Deoxybrevianamide E synthase from Aspergillus versicolor.